Reading from the N-terminus, the 275-residue chain is NH(3)-dependent NAD(+) synthetase (275 aa).

46–53 (GISGGQDS) contacts ATP. D52 lines the Mg(2+) pocket. R140 serves as a coordination point for deamido-NAD(+). Residue T160 participates in ATP binding. Residue E165 coordinates Mg(2+). Positions 173 and 180 each coordinate deamido-NAD(+). Residues K189 and T211 each coordinate ATP. A deamido-NAD(+)-binding site is contributed by 260-261 (HK).

It belongs to the NAD synthetase family. Homodimer.

It catalyses the reaction deamido-NAD(+) + NH4(+) + ATP = AMP + diphosphate + NAD(+) + H(+). Its pathway is cofactor biosynthesis; NAD(+) biosynthesis; NAD(+) from deamido-NAD(+) (ammonia route): step 1/1. Functionally, catalyzes the ATP-dependent amidation of deamido-NAD to form NAD. Uses ammonia as a nitrogen source. The chain is NH(3)-dependent NAD(+) synthetase from Escherichia coli O8 (strain IAI1).